We begin with the raw amino-acid sequence, 415 residues long: ATP-dependent RNA helicase RhlB (415 aa).

A Q motif motif is present at residues 9-37; that stretch reads QRFSALPLHPIVRGALAKKGFDFCTPIQA. One can recognise a Helicase ATP-binding domain in the interval 40–218; sequence LPISLNGRDV…FEDMNEPEYI (179 aa). 53-60 serves as a coordination point for ATP; it reads AQTGTGKT. Residues 164–167 carry the DEAD box motif; it reads DEAD. Residues 241–389 form the Helicase C-terminal domain; that stretch reads DKMALLLTLM…VSQYETEALL (149 aa).

The protein belongs to the DEAD box helicase family. RhlB subfamily. As to quaternary structure, component of the RNA degradosome, which is a multiprotein complex involved in RNA processing and mRNA degradation.

It localises to the cytoplasm. It catalyses the reaction ATP + H2O = ADP + phosphate + H(+). DEAD-box RNA helicase involved in RNA degradation. Has RNA-dependent ATPase activity and unwinds double-stranded RNA. The polypeptide is ATP-dependent RNA helicase RhlB (Haemophilus influenzae (strain ATCC 51907 / DSM 11121 / KW20 / Rd)).